Here is a 198-residue protein sequence, read N- to C-terminus: ATP-dependent Clp protease proteolytic subunit 2 (198 aa).

Ser-101 functions as the Nucleophile in the catalytic mechanism. His-126 is an active-site residue.

It belongs to the peptidase S14 family. As to quaternary structure, fourteen ClpP subunits assemble into 2 heptameric rings which stack back to back to give a disk-like structure with a central cavity, resembling the structure of eukaryotic proteasomes.

Its subcellular location is the cytoplasm. The catalysed reaction is Hydrolysis of proteins to small peptides in the presence of ATP and magnesium. alpha-casein is the usual test substrate. In the absence of ATP, only oligopeptides shorter than five residues are hydrolyzed (such as succinyl-Leu-Tyr-|-NHMec, and Leu-Tyr-Leu-|-Tyr-Trp, in which cleavage of the -Tyr-|-Leu- and -Tyr-|-Trp bonds also occurs).. Cleaves peptides in various proteins in a process that requires ATP hydrolysis. Has a chymotrypsin-like activity. Plays a major role in the degradation of misfolded proteins. This Thermosynechococcus vestitus (strain NIES-2133 / IAM M-273 / BP-1) protein is ATP-dependent Clp protease proteolytic subunit 2.